The primary structure comprises 67 residues: V-type proton ATPase subunit e (67 aa).

The Lumenal portion of the chain corresponds to 1–2 (MG). A helical transmembrane segment spans residues 3-23 (GLVVLLVGLLTALMSVVSYYV). Topologically, residues 24 to 35 (SPKGNNTSTWQM) are cytoplasmic. Residues 36 to 56 (SLILTFSCCYLLWAITYLAQL) traverse the membrane as a helical segment. Residues 57 to 67 (HPLEAPSRVLE) lie on the Lumenal side of the membrane.

The protein belongs to the V-ATPase e1/e2 subunit family. V-ATPase is a heteromultimeric enzyme composed of a peripheral catalytic V1 complex (components A to H) attached to an integral membrane V0 proton pore complex (components: a, c, c', c'', d, e, f and VOA1).

It localises to the vacuole membrane. Functionally, subunit of the V0 complex of vacuolar(H+)-ATPase (V-ATPase), a multisubunit enzyme composed of a peripheral complex (V1) that hydrolyzes ATP and a membrane integral complex (V0) that translocates protons. V-ATPase is responsible for acidifying and maintaining the pH of intracellular compartments. This chain is V-type proton ATPase subunit e (vma9), found in Schizosaccharomyces pombe (strain 972 / ATCC 24843) (Fission yeast).